The sequence spans 430 residues: Serine--tRNA ligase (430 aa).

T237–E239 is an L-serine binding site. R268 to E270 contributes to the ATP binding site. L-serine is bound at residue E291. E355–S358 lines the ATP pocket. Residue S391 coordinates L-serine.

Belongs to the class-II aminoacyl-tRNA synthetase family. Type-1 seryl-tRNA synthetase subfamily. In terms of assembly, homodimer. The tRNA molecule binds across the dimer.

The protein resides in the cytoplasm. It catalyses the reaction tRNA(Ser) + L-serine + ATP = L-seryl-tRNA(Ser) + AMP + diphosphate + H(+). The enzyme catalyses tRNA(Sec) + L-serine + ATP = L-seryl-tRNA(Sec) + AMP + diphosphate + H(+). It functions in the pathway aminoacyl-tRNA biosynthesis; selenocysteinyl-tRNA(Sec) biosynthesis; L-seryl-tRNA(Sec) from L-serine and tRNA(Sec): step 1/1. Functionally, catalyzes the attachment of serine to tRNA(Ser). Is also able to aminoacylate tRNA(Sec) with serine, to form the misacylated tRNA L-seryl-tRNA(Sec), which will be further converted into selenocysteinyl-tRNA(Sec). The sequence is that of Serine--tRNA ligase from Salmonella heidelberg (strain SL476).